Reading from the N-terminus, the 517-residue chain is ATP synthase subunit alpha (517 aa).

An ATP-binding site is contributed by 174 to 181; sequence GDRQTGKT.

This sequence belongs to the ATPase alpha/beta chains family. In terms of assembly, F-type ATPases have 2 components, CF(1) - the catalytic core - and CF(0) - the membrane proton channel. CF(1) has five subunits: alpha(3), beta(3), gamma(1), delta(1), epsilon(1). CF(0) has three main subunits: a(1), b(2) and c(9-12). The alpha and beta chains form an alternating ring which encloses part of the gamma chain. CF(1) is attached to CF(0) by a central stalk formed by the gamma and epsilon chains, while a peripheral stalk is formed by the delta and b chains.

Its subcellular location is the cell inner membrane. It carries out the reaction ATP + H2O + 4 H(+)(in) = ADP + phosphate + 5 H(+)(out). Produces ATP from ADP in the presence of a proton gradient across the membrane. The alpha chain is a regulatory subunit. This Delftia acidovorans (strain DSM 14801 / SPH-1) protein is ATP synthase subunit alpha.